The following is a 54-amino-acid chain: Large ribosomal subunit protein bL33 (54 aa).

The protein belongs to the bacterial ribosomal protein bL33 family.

The polypeptide is Large ribosomal subunit protein bL33 (Frankia alni (strain DSM 45986 / CECT 9034 / ACN14a)).